Reading from the N-terminus, the 309-residue chain is Dehydrogenase/reductase SDR family member 7B (309 aa).

The Cytoplasmic segment spans residues 1–5 (MERAL). A helical; Signal-anchor for type II membrane protein transmembrane segment spans residues 6–26 (GVGIGPLAAGTVGLLILLKVI). Topologically, residues 27–271 (QRLRRRPNIQ…LKAVCQKKKD (245 aa)) are lumenal. NAD(+) contacts are provided by S47 and L49. Residue S179 coordinates substrate. Residues Y192, K196, and T227 each contribute to the NAD(+) site. Y192 acts as the Proton acceptor in catalysis.

Belongs to the short-chain dehydrogenases/reductases (SDR) family.

The protein resides in the endoplasmic reticulum membrane. Functionally, putative oxidoreductase. The protein is Dehydrogenase/reductase SDR family member 7B (dhrs7b) of Danio rerio (Zebrafish).